The primary structure comprises 381 residues: Chaperone protein DnaJ 1 (381 aa).

Residues 4 to 68 form the J domain; sequence DYYGLLGVSR…EKRRIVDLGG (65 aa). The segment at 132 to 214 adopts a CR-type zinc-finger fold; that stretch reads GVTKQVTVDT…CMGDGRVRAR (83 aa). Positions 145, 148, 162, 165, 188, 191, 202, and 205 each coordinate Zn(2+). 4 CXXCXGXG motif repeats span residues 145–152, 162–169, 188–195, and 202–209; these read CDRCHGKG, CDTCGGRG, CPTCRGVG, and CHQCMGDG.

Belongs to the DnaJ family. Homodimer. The cofactor is Zn(2+).

It localises to the cytoplasm. In terms of biological role, participates actively in the response to hyperosmotic and heat shock by preventing the aggregation of stress-denatured proteins and by disaggregating proteins, also in an autonomous, DnaK-independent fashion. Unfolded proteins bind initially to DnaJ; upon interaction with the DnaJ-bound protein, DnaK hydrolyzes its bound ATP, resulting in the formation of a stable complex. GrpE releases ADP from DnaK; ATP binding to DnaK triggers the release of the substrate protein, thus completing the reaction cycle. Several rounds of ATP-dependent interactions between DnaJ, DnaK and GrpE are required for fully efficient folding. Also involved, together with DnaK and GrpE, in the DNA replication of plasmids through activation of initiation proteins. This is Chaperone protein DnaJ 1 from Mycolicibacterium paratuberculosis (strain ATCC BAA-968 / K-10) (Mycobacterium paratuberculosis).